The sequence spans 236 residues: tRNA1(Val) (adenine(37)-N6)-methyltransferase (236 aa).

It belongs to the methyltransferase superfamily. tRNA (adenine-N(6)-)-methyltransferase family.

It localises to the cytoplasm. The enzyme catalyses adenosine(37) in tRNA1(Val) + S-adenosyl-L-methionine = N(6)-methyladenosine(37) in tRNA1(Val) + S-adenosyl-L-homocysteine + H(+). In terms of biological role, specifically methylates the adenine in position 37 of tRNA(1)(Val) (anticodon cmo5UAC). The protein is tRNA1(Val) (adenine(37)-N6)-methyltransferase of Histophilus somni (strain 129Pt) (Haemophilus somnus).